The sequence spans 343 residues: Glyceraldehyde-3-phosphate dehydrogenase (343 aa).

NAD(+) is bound by residues 13–14 (TI) and glycine 112. 141–143 (SCN) is a D-glyceraldehyde 3-phosphate binding site. Cysteine 142 acts as the Nucleophile in catalysis. Arginine 170 contacts NAD(+). 196–197 (HA) is a D-glyceraldehyde 3-phosphate binding site. Glutamine 303 is a binding site for NAD(+).

The protein belongs to the glyceraldehyde-3-phosphate dehydrogenase family. In terms of assembly, homotetramer.

Its subcellular location is the cytoplasm. The catalysed reaction is D-glyceraldehyde 3-phosphate + phosphate + NADP(+) = (2R)-3-phospho-glyceroyl phosphate + NADPH + H(+). It carries out the reaction D-glyceraldehyde 3-phosphate + phosphate + NAD(+) = (2R)-3-phospho-glyceroyl phosphate + NADH + H(+). It functions in the pathway carbohydrate degradation; glycolysis; pyruvate from D-glyceraldehyde 3-phosphate: step 1/5. The polypeptide is Glyceraldehyde-3-phosphate dehydrogenase (gap) (Aeropyrum pernix (strain ATCC 700893 / DSM 11879 / JCM 9820 / NBRC 100138 / K1)).